Reading from the N-terminus, the 346-residue chain is Phosphoribosylformylglycinamidine cyclo-ligase (346 aa).

It belongs to the AIR synthase family.

The protein localises to the cytoplasm. The catalysed reaction is 2-formamido-N(1)-(5-O-phospho-beta-D-ribosyl)acetamidine + ATP = 5-amino-1-(5-phospho-beta-D-ribosyl)imidazole + ADP + phosphate + H(+). It participates in purine metabolism; IMP biosynthesis via de novo pathway; 5-amino-1-(5-phospho-D-ribosyl)imidazole from N(2)-formyl-N(1)-(5-phospho-D-ribosyl)glycinamide: step 2/2. The sequence is that of Phosphoribosylformylglycinamidine cyclo-ligase from Bacillus thuringiensis subsp. konkukian (strain 97-27).